The following is a 1160-amino-acid chain: Major DNA-binding protein (1160 aa).

A Required for filament formation motif is present at residues 808–809 (FW). The segment at 1139 to 1160 (ARGGEHAFDEDCGLLPAKRGRL) is required for nuclear localization.

This sequence belongs to the herpesviridae major DNA-binding protein family. Homooligomers. Forms double-helical filaments necessary for the formation of replication compartments within the host nucleus. Interacts with the origin-binding protein. Interacts with the helicase primase complex; this interaction stimulates primer synthesis activity of the helicase-primase complex. Interacts with the DNA polymerase. Interacts with the alkaline exonuclease; this interaction increases its nuclease processivity.

It localises to the host nucleus. Single-stranded DNA-binding protein required for DNA replication. Its function is as follows. Plays several crucial roles in viral infection. Participates in the opening of the viral DNA origin to initiate replication by interacting with the origin-binding protein. May disrupt loops, hairpins and other secondary structures present on ssDNA to reduce and eliminate pausing of viral DNA polymerase at specific sites during elongation. Promotes viral DNA recombination by performing strand-transfer, characterized by the ability to transfer a DNA strand from a linear duplex to a complementary single-stranded DNA circle. Can also catalyze the renaturation of complementary single strands. Additionally, reorganizes the host cell nucleus, leading to the formation of prereplicative sites and replication compartments. This process is driven by the protein which can form double-helical filaments in the absence of DNA. The sequence is that of Major DNA-binding protein from Simian cytomegalovirus (strain Colburn).